The following is a 71-amino-acid chain: Phenoloxidase 3 (71 aa).

Cu cation contacts are provided by His3 and His29.

The protein belongs to the tyrosinase family. It depends on Cu(2+) as a cofactor. Upon activation, a trypsin type protease cleaves prophenol oxidase to yield the active enzyme. In terms of tissue distribution, hemocytes and plasma.

It is found in the secreted. The enzyme catalyses 2 L-dopa + O2 = 2 L-dopaquinone + 2 H2O. The catalysed reaction is L-tyrosine + O2 = L-dopaquinone + H2O. In terms of biological role, this is a copper-containing oxidase that functions in the formation of pigments such as melanins and other polyphenolic compounds. Catalyzes the rate-limiting conversions of tyrosine to DOPA, DOPA to DOPA-quinone and possibly 5,6 dihydroxyindole to indole-5'6 quinone. This chain is Phenoloxidase 3, found in Sarcophaga argyrostoma (Flesh fly).